The sequence spans 189 residues: Probable chorismate pyruvate-lyase (189 aa).

Substrate is bound by residues R77, L115, and E174.

Belongs to the UbiC family.

It localises to the cytoplasm. The catalysed reaction is chorismate = 4-hydroxybenzoate + pyruvate. Its pathway is cofactor biosynthesis; ubiquinone biosynthesis. Removes the pyruvyl group from chorismate, with concomitant aromatization of the ring, to provide 4-hydroxybenzoate (4HB) for the ubiquinone pathway. The protein is Probable chorismate pyruvate-lyase of Shewanella sp. (strain MR-7).